The following is a 177-amino-acid chain: Putative membrane protein 165 (177 aa).

Over 1–7 (MYLVLLI) the chain is Intravirion. Residues 8 to 24 (AVILFIIVILMIFLISG) traverse the membrane as a helical segment. At 25 to 166 (LFYPEQEPAL…DPHPALKSKN (142 aa)) the chain is on the virion surface side.

This sequence belongs to the asfivirus envelope protein p22 family.

The protein resides in the virion membrane. It localises to the host cell membrane. The sequence is that of Putative membrane protein 165 from African swine fever virus (isolate Pig/Kenya/KEN-50/1950) (ASFV).